A 71-amino-acid chain; its full sequence is Small ribosomal subunit protein bS21 (71 aa).

Basic residues predominate over residues 48-59 (KAAAAVKRHAKK). The segment at 48–71 (KAAAAVKRHAKKVQRENRKFQRLY) is disordered. Residues 60-71 (VQRENRKFQRLY) are compositionally biased toward basic and acidic residues.

The protein belongs to the bacterial ribosomal protein bS21 family.

The sequence is that of Small ribosomal subunit protein bS21 from Teredinibacter turnerae (strain ATCC 39867 / T7901).